The sequence spans 484 residues: Acetaldehyde dehydrogenase (acetylating) (484 aa).

It belongs to the aldehyde dehydrogenase family.

The catalysed reaction is acetaldehyde + NAD(+) + CoA = acetyl-CoA + NADH + H(+). The protein operates within organosulfur degradation; alkanesulfonate degradation. Functionally, involved in an anaerobic respiration pathway that converts the sulfonate taurine (2-aminoethanesulfonate) to ammonia, acetate and sulfide. Catalyzes the oxidation of acetaldehyde to acetyl-CoA in the presence of CoASH and NAD(+). Highly prefers NAD(+) over NADP(+). The sequence is that of Acetaldehyde dehydrogenase (acetylating) from Bilophila wadsworthia (strain 3_1_6).